Reading from the N-terminus, the 294-residue chain is Probable 2-(5''-triphosphoribosyl)-3'-dephosphocoenzyme-A synthase (294 aa).

This sequence belongs to the CitG/MdcB family.

The catalysed reaction is 3'-dephospho-CoA + ATP = 2'-(5''-triphospho-alpha-D-ribosyl)-3'-dephospho-CoA + adenine. In Streptococcus equi subsp. equi (strain 4047), this protein is Probable 2-(5''-triphosphoribosyl)-3'-dephosphocoenzyme-A synthase.